A 139-amino-acid chain; its full sequence is Small ribosomal subunit protein uS12m (139 aa).

The segment at 1–21 (MLSTLYQNDLKKKRNRRRNRS) is disordered. The segment covering 11 to 20 (KKKRNRRRNR) has biased composition (basic residues).

It belongs to the universal ribosomal protein uS12 family.

It is found in the mitochondrion. In terms of biological role, protein S12 is involved in the translation initiation step. The chain is Small ribosomal subunit protein uS12m (RPS12) from Paramecium tetraurelia.